The chain runs to 396 residues: NADH-quinone oxidoreductase subunit D (396 aa).

Belongs to the complex I 49 kDa subunit family. As to quaternary structure, NDH-1 is composed of 14 different subunits. Subunits NuoB, C, D, E, F, and G constitute the peripheral sector of the complex.

Its subcellular location is the cell inner membrane. It carries out the reaction a quinone + NADH + 5 H(+)(in) = a quinol + NAD(+) + 4 H(+)(out). Its function is as follows. NDH-1 shuttles electrons from NADH, via FMN and iron-sulfur (Fe-S) centers, to quinones in the respiratory chain. The immediate electron acceptor for the enzyme in this species is believed to be ubiquinone. Couples the redox reaction to proton translocation (for every two electrons transferred, four hydrogen ions are translocated across the cytoplasmic membrane), and thus conserves the redox energy in a proton gradient. This chain is NADH-quinone oxidoreductase subunit D, found in Agrobacterium fabrum (strain C58 / ATCC 33970) (Agrobacterium tumefaciens (strain C58)).